A 337-amino-acid polypeptide reads, in one-letter code: Fructose-1,6-bisphosphatase class 1 (337 aa).

Glutamate 89, aspartate 112, leucine 114, and aspartate 115 together coordinate Mg(2+). Substrate-binding positions include 115–118, asparagine 208, tyrosine 241, and lysine 271; that span reads DGSS. Glutamate 277 serves as a coordination point for Mg(2+).

It belongs to the FBPase class 1 family. As to quaternary structure, homotetramer. Requires Mg(2+) as cofactor.

The protein localises to the cytoplasm. The catalysed reaction is beta-D-fructose 1,6-bisphosphate + H2O = beta-D-fructose 6-phosphate + phosphate. The protein operates within carbohydrate biosynthesis; gluconeogenesis. This chain is Fructose-1,6-bisphosphatase class 1, found in Yersinia pestis bv. Antiqua (strain Antiqua).